Here is a 59-residue protein sequence, read N- to C-terminus: Mitochondrial sheath formation-associated protein (59 aa).

Topologically, residues 1-6 are mitochondrial intermembrane; it reads MIVLGW. A run of 2 helical transmembrane segments spans residues 2 to 22 and 7 to 23; these read IVLGWMFFVGLVCYMGTFPEL and MFFVGLVCYMGTFPELM. Residues 24–40 are Cytoplasmic-facing; that stretch reads PPTLKWQERWPVQESKT.

In terms of assembly, interacts with VDAC3.

It localises to the mitochondrion outer membrane. Functionally, regulates sperm development. May be involved in mitochondrial sheath formation. The polypeptide is Mitochondrial sheath formation-associated protein (Homo sapiens (Human)).